The primary structure comprises 489 residues: Bifunctional protein HldE (489 aa).

The segment at 1–330 (MFDFDGLSNA…RKILPPAFLA (330 aa)) is ribokinase. An ATP-binding site is contributed by 205–208 (NRKE). Aspartate 275 is a catalytic residue. Residues 358–489 (FTNGCFDILH…SLVKRAGGRA (132 aa)) are cytidylyltransferase.

The protein in the N-terminal section; belongs to the carbohydrate kinase PfkB family. In the C-terminal section; belongs to the cytidylyltransferase family. In terms of assembly, homodimer.

The enzyme catalyses D-glycero-beta-D-manno-heptose 7-phosphate + ATP = D-glycero-beta-D-manno-heptose 1,7-bisphosphate + ADP + H(+). It catalyses the reaction D-glycero-beta-D-manno-heptose 1-phosphate + ATP + H(+) = ADP-D-glycero-beta-D-manno-heptose + diphosphate. It functions in the pathway nucleotide-sugar biosynthesis; ADP-L-glycero-beta-D-manno-heptose biosynthesis; ADP-L-glycero-beta-D-manno-heptose from D-glycero-beta-D-manno-heptose 7-phosphate: step 1/4. The protein operates within nucleotide-sugar biosynthesis; ADP-L-glycero-beta-D-manno-heptose biosynthesis; ADP-L-glycero-beta-D-manno-heptose from D-glycero-beta-D-manno-heptose 7-phosphate: step 3/4. Functionally, catalyzes the phosphorylation of D-glycero-D-manno-heptose 7-phosphate at the C-1 position to selectively form D-glycero-beta-D-manno-heptose-1,7-bisphosphate. Its function is as follows. Catalyzes the ADP transfer from ATP to D-glycero-beta-D-manno-heptose 1-phosphate, yielding ADP-D-glycero-beta-D-manno-heptose. The sequence is that of Bifunctional protein HldE from Nitrobacter hamburgensis (strain DSM 10229 / NCIMB 13809 / X14).